Consider the following 131-residue polypeptide: Large ribosomal subunit protein uL22c (131 aa).

It belongs to the universal ribosomal protein uL22 family. In terms of assembly, part of the 50S ribosomal subunit.

The protein localises to the plastid. This protein binds specifically to 23S rRNA. In terms of biological role, the globular domain of the protein is located near the polypeptide exit tunnel on the outside of the subunit, while an extended beta-hairpin is found that lines the wall of the exit tunnel in the center of the 70S ribosome. This chain is Large ribosomal subunit protein uL22c (rpl22), found in Aneura mirabilis (Parasitic liverwort).